The sequence spans 379 residues: MTAEHFPVTELAKDLISRPSVTPLDEGCQTLMAERLSAIGFNIEPMIFEDTTNMWARRGNQGPVFCFAGHTDVVPTGDISRWHTPPFEPTIIDGYLYGRGAADMKGSLAAMIVATERFVTKHPDHQGSIAFLITSDEEGPFINGTTRVIDTLEARNEKITWALVGEPSSTLKLGDVVKNGRRGSLTGNLTIKGIQGHVAYPHLADNPIHKAAPFLAELSQMHWDNGNEFFPPTSMQIANIHGGTGASNVIPGALEVMFNFRYSTEVTAEILIERVEALLKAHELDYDISWIFNGLPFLTGEGPLLDATRYAIHQVTGYDTSPQTTGGTSDGRFIAPTGAKVLELGPVNATIHKVNECVKVDDLEQLALCYEVILEQLLC.

Histidine 70 contacts Zn(2+). Aspartate 72 is a catalytic residue. Aspartate 103 is a binding site for Zn(2+). The active-site Proton acceptor is glutamate 137. Zn(2+) is bound by residues glutamate 138, glutamate 166, and histidine 352.

This sequence belongs to the peptidase M20A family. DapE subfamily. In terms of assembly, homodimer. Zn(2+) serves as cofactor. It depends on Co(2+) as a cofactor.

The enzyme catalyses N-succinyl-(2S,6S)-2,6-diaminopimelate + H2O = (2S,6S)-2,6-diaminopimelate + succinate. Its pathway is amino-acid biosynthesis; L-lysine biosynthesis via DAP pathway; LL-2,6-diaminopimelate from (S)-tetrahydrodipicolinate (succinylase route): step 3/3. Functionally, catalyzes the hydrolysis of N-succinyl-L,L-diaminopimelic acid (SDAP), forming succinate and LL-2,6-diaminopimelate (DAP), an intermediate involved in the bacterial biosynthesis of lysine and meso-diaminopimelic acid, an essential component of bacterial cell walls. This Shewanella putrefaciens (strain CN-32 / ATCC BAA-453) protein is Succinyl-diaminopimelate desuccinylase.